Reading from the N-terminus, the 462-residue chain is Jasmonoyl--L-amino acid synthetase GH3.3 (462 aa).

S103 provides a ligand contact to ATP. S106 lines the jasmonate pocket. Residues T126, N172, and 337-342 (GASEGW) contribute to the ATP site. 170-174 (TTNVY) provides a ligand contact to an L-alpha-amino acid. Jasmonate contacts are provided by residues 334-337 (AEYG) and S339.

This sequence belongs to the IAA-amido conjugating enzyme family. Expressed in green shoots and flowers.

The catalysed reaction is a jasmonate + an L-alpha-amino acid + ATP = a jasmonyl-L-amino acid + AMP + diphosphate + H(+). In terms of biological role, catalyzes the synthesis of jasmonate-amino acid conjugates by adenylation. Catalyzes the conjugation of jasmonate (JA) to Ile when expressed in a heterologous system (E.coli). Catalyzes in vitro the conjugation of jasmonate (JA) to Ile, Phe, Leu, Met, Val and Trp. May catalyze the synthesis of indole-3-acetic acid (IAA)-amino acid conjugates, providing a mechanism for the plant to cope with the presence of excess auxin. The protein is Jasmonoyl--L-amino acid synthetase GH3.3 of Oryza sativa subsp. japonica (Rice).